The primary structure comprises 253 residues: 5'/3'-nucleotidase SurE (253 aa).

Residues Asp-8, Asp-9, Ser-39, and Asn-92 each contribute to the a divalent metal cation site.

Belongs to the SurE nucleotidase family. It depends on a divalent metal cation as a cofactor.

It is found in the cytoplasm. The enzyme catalyses a ribonucleoside 5'-phosphate + H2O = a ribonucleoside + phosphate. The catalysed reaction is a ribonucleoside 3'-phosphate + H2O = a ribonucleoside + phosphate. It catalyses the reaction [phosphate](n) + H2O = [phosphate](n-1) + phosphate + H(+). In terms of biological role, nucleotidase with a broad substrate specificity as it can dephosphorylate various ribo- and deoxyribonucleoside 5'-monophosphates and ribonucleoside 3'-monophosphates with highest affinity to 3'-AMP. Also hydrolyzes polyphosphate (exopolyphosphatase activity) with the preference for short-chain-length substrates (P20-25). Might be involved in the regulation of dNTP and NTP pools, and in the turnover of 3'-mononucleotides produced by numerous intracellular RNases (T1, T2, and F) during the degradation of various RNAs. The protein is 5'/3'-nucleotidase SurE of Shigella boydii serotype 18 (strain CDC 3083-94 / BS512).